The chain runs to 181 residues: Caveolin-1 (181 aa).

The Cytoplasmic portion of the chain corresponds to 1 to 107; the sequence is MTGGLRDGEK…TKYWCYRLLT (107 aa). Residues 108-128 constitute an intramembrane region (helical); that stretch reads ALVGIPLALIWGIFFAILSFI. The Cytoplasmic portion of the chain corresponds to 129–181; it reads HIWAVVPCVKSYLIEIHCISRVYSICVHTFCDPLFEAMGKCLGGVRIRTSKEV. S-palmitoyl cysteine attachment occurs at residues C136, C146, and C159.

The protein belongs to the caveolin family. As to quaternary structure, homooligomer.

Its subcellular location is the golgi apparatus membrane. It is found in the cell membrane. The protein localises to the membrane. It localises to the caveola. The protein resides in the membrane raft. In terms of biological role, may act as a positive regulator of T-cell coactivation. May act as a scaffolding protein within caveolar membranes. Interacts directly with G-protein alpha subunits and can functionally regulate their activity. In Takifugu rubripes (Japanese pufferfish), this protein is Caveolin-1 (cav1).